The chain runs to 478 residues: Probable glucan endo-1,3-beta-glucosidase A6 (478 aa).

The N-terminal stretch at methionine 1 to serine 20 is a signal peptide. Catalysis depends on glutamate 135, which acts as the Proton donor. Glutamate 280 (nucleophile) is an active-site residue. A disulfide bridge connects residues cysteine 390 and cysteine 453.

This sequence belongs to the glycosyl hydrolase 17 family. Post-translationally, contains two additional disulfide bonds, but it is unclear if they are between the pairs Cys-409-Cys-416 and Cys-425-Cys-471 or between the pairs Cys-409-Cys-471 and Cys-416-Cys-425. Anthers.

It catalyses the reaction Hydrolysis of (1-&gt;3)-beta-D-glucosidic linkages in (1-&gt;3)-beta-D-glucans.. Probable beta-1,3-glucanase that may be involved in the degradation of callose walls around the microspore tetrad during pollen development. May be required for pollen exine formation. The protein is Probable glucan endo-1,3-beta-glucosidase A6 of Arabidopsis thaliana (Mouse-ear cress).